A 163-amino-acid chain; its full sequence is Cyanate hydratase (163 aa).

Active-site residues include Arg-103, Glu-106, and Ser-129.

The protein belongs to the cyanase family.

The catalysed reaction is cyanate + hydrogencarbonate + 3 H(+) = NH4(+) + 2 CO2. In terms of biological role, catalyzes the reaction of cyanate with bicarbonate to produce ammonia and carbon dioxide. This chain is Cyanate hydratase, found in Ajellomyces capsulatus (strain G186AR / H82 / ATCC MYA-2454 / RMSCC 2432) (Darling's disease fungus).